The chain runs to 195 residues: Peptidyl-tRNA hydrolase (195 aa).

Tyr17 provides a ligand contact to tRNA. The active-site Proton acceptor is the His22. The tRNA site is built by Phe68, Asn70, and Asn116.

The protein belongs to the PTH family. As to quaternary structure, monomer.

The protein localises to the cytoplasm. It catalyses the reaction an N-acyl-L-alpha-aminoacyl-tRNA + H2O = an N-acyl-L-amino acid + a tRNA + H(+). Functionally, hydrolyzes ribosome-free peptidyl-tRNAs (with 1 or more amino acids incorporated), which drop off the ribosome during protein synthesis, or as a result of ribosome stalling. Its function is as follows. Catalyzes the release of premature peptidyl moieties from peptidyl-tRNA molecules trapped in stalled 50S ribosomal subunits, and thus maintains levels of free tRNAs and 50S ribosomes. The sequence is that of Peptidyl-tRNA hydrolase from Shewanella denitrificans (strain OS217 / ATCC BAA-1090 / DSM 15013).